A 112-amino-acid polypeptide reads, in one-letter code: MKKKTGQLYEGAYVFSVTLSEDARRKALEKVTSGITNYGGEVLKIHDQGRKKLAYTIRGAREGYYYFIYFTVAPEAIAELWREYHLNEDLLRFMTLKASAVKEVLEFATLPE.

It belongs to the bacterial ribosomal protein bS6 family.

Binds together with bS18 to 16S ribosomal RNA. In Chlamydia trachomatis serovar L2 (strain ATCC VR-902B / DSM 19102 / 434/Bu), this protein is Small ribosomal subunit protein bS6.